The sequence spans 433 residues: UDP-N-acetylmuramoylalanine--D-glutamate ligase (433 aa).

125 to 131 (GTSGKTT) is an ATP binding site.

The protein belongs to the MurCDEF family.

It is found in the cytoplasm. It catalyses the reaction UDP-N-acetyl-alpha-D-muramoyl-L-alanine + D-glutamate + ATP = UDP-N-acetyl-alpha-D-muramoyl-L-alanyl-D-glutamate + ADP + phosphate + H(+). It functions in the pathway cell wall biogenesis; peptidoglycan biosynthesis. Its function is as follows. Cell wall formation. Catalyzes the addition of glutamate to the nucleotide precursor UDP-N-acetylmuramoyl-L-alanine (UMA). This Nitratidesulfovibrio vulgaris (strain ATCC 29579 / DSM 644 / CCUG 34227 / NCIMB 8303 / VKM B-1760 / Hildenborough) (Desulfovibrio vulgaris) protein is UDP-N-acetylmuramoylalanine--D-glutamate ligase.